The primary structure comprises 76 residues: UPF0346 protein lhv_1069 (76 aa).

This sequence belongs to the UPF0346 family.

This is UPF0346 protein lhv_1069 from Lactobacillus helveticus (strain DPC 4571).